Consider the following 91-residue polypeptide: Probable Fe(2+)-trafficking protein (91 aa).

Belongs to the Fe(2+)-trafficking protein family.

Its function is as follows. Could be a mediator in iron transactions between iron acquisition and iron-requiring processes, such as synthesis and/or repair of Fe-S clusters in biosynthetic enzymes. The protein is Probable Fe(2+)-trafficking protein of Xanthomonas euvesicatoria pv. vesicatoria (strain 85-10) (Xanthomonas campestris pv. vesicatoria).